The following is a 79-amino-acid chain: Sulfur carrier protein TusA (79 aa).

The Cysteine persulfide intermediate role is filled by cysteine 16.

This sequence belongs to the sulfur carrier protein TusA family.

The protein localises to the cytoplasm. Functionally, sulfur carrier protein which probably makes part of a sulfur-relay system. The polypeptide is Sulfur carrier protein TusA (Pseudomonas paraeruginosa (strain DSM 24068 / PA7) (Pseudomonas aeruginosa (strain PA7))).